Here is a 307-residue protein sequence, read N- to C-terminus: Tyrosine recombinase XerC (307 aa).

The region spanning 6-89 (HNTLQTVNTF…TLRTFFRYLM (84 aa)) is the Core-binding (CB) domain. Residues 110–293 (RLPKALDVDQ…DFQHLAQVYD (184 aa)) form the Tyr recombinase domain. Catalysis depends on residues Arg-151, Lys-175, His-245, Arg-248, and His-271. Tyr-280 (O-(3'-phospho-DNA)-tyrosine intermediate) is an active-site residue.

The protein belongs to the 'phage' integrase family. XerC subfamily. In terms of assembly, forms a cyclic heterotetrameric complex composed of two molecules of XerC and two molecules of XerD.

It localises to the cytoplasm. Functionally, site-specific tyrosine recombinase, which acts by catalyzing the cutting and rejoining of the recombining DNA molecules. The XerC-XerD complex is essential to convert dimers of the bacterial chromosome into monomers to permit their segregation at cell division. It also contributes to the segregational stability of plasmids. In Alcanivorax borkumensis (strain ATCC 700651 / DSM 11573 / NCIMB 13689 / SK2), this protein is Tyrosine recombinase XerC.